Consider the following 128-residue polypeptide: ATP synthase epsilon chain (128 aa).

Residues 98 to 128 (EALDMPSSTPEQAQIKDAAVRRARGQLRASR) form a disordered region. Over residues 118 to 128 (RRARGQLRASR) the composition is skewed to basic residues.

It belongs to the ATPase epsilon chain family. F-type ATPases have 2 components, CF(1) - the catalytic core - and CF(0) - the membrane proton channel. CF(1) has five subunits: alpha(3), beta(3), gamma(1), delta(1), epsilon(1). CF(0) has three main subunits: a, b and c.

The protein localises to the cell inner membrane. Produces ATP from ADP in the presence of a proton gradient across the membrane. This Rhodopirellula baltica (strain DSM 10527 / NCIMB 13988 / SH1) protein is ATP synthase epsilon chain.